The chain runs to 35 residues: Photosystem II reaction center protein T (35 aa).

Residues 3-23 (ALVYTFLLVSTLGIIFFAIFF) traverse the membrane as a helical segment.

Belongs to the PsbT family. PSII is composed of 1 copy each of membrane proteins PsbA, PsbB, PsbC, PsbD, PsbE, PsbF, PsbH, PsbI, PsbJ, PsbK, PsbL, PsbM, PsbT, PsbY, PsbZ, Psb30/Ycf12, at least 3 peripheral proteins of the oxygen-evolving complex and a large number of cofactors. It forms dimeric complexes.

The protein localises to the plastid. It localises to the chloroplast thylakoid membrane. Its function is as follows. Found at the monomer-monomer interface of the photosystem II (PS II) dimer, plays a role in assembly and dimerization of PSII. PSII is a light-driven water plastoquinone oxidoreductase, using light energy to abstract electrons from H(2)O, generating a proton gradient subsequently used for ATP formation. In Saururus cernuus (Lizard's tail), this protein is Photosystem II reaction center protein T.